Reading from the N-terminus, the 199-residue chain is NAD(P)H dehydrogenase (quinone) (199 aa).

Residues 4–190 (VLVLYYSSYG…EGARHQGELV (187 aa)) form the Flavodoxin-like domain. Residues 10–15 (SSYGHI) and 78–80 (TRY) contribute to the FMN site. Y12 contributes to the NAD(+) binding site. W98 lines the substrate pocket. Residues 113 to 119 (STATQHG) and H134 contribute to the FMN site.

This sequence belongs to the WrbA family. It depends on FMN as a cofactor.

The catalysed reaction is a quinone + NADH + H(+) = a quinol + NAD(+). It catalyses the reaction a quinone + NADPH + H(+) = a quinol + NADP(+). In Paraburkholderia phymatum (strain DSM 17167 / CIP 108236 / LMG 21445 / STM815) (Burkholderia phymatum), this protein is NAD(P)H dehydrogenase (quinone).